The sequence spans 274 residues: Small ribosomal subunit protein uS2 (274 aa).

The protein belongs to the universal ribosomal protein uS2 family.

This Syntrophobacter fumaroxidans (strain DSM 10017 / MPOB) protein is Small ribosomal subunit protein uS2.